A 617-amino-acid chain; its full sequence is Proline--tRNA ligase (617 aa).

Belongs to the class-II aminoacyl-tRNA synthetase family. ProS type 1 subfamily. Homodimer.

It localises to the cytoplasm. It carries out the reaction tRNA(Pro) + L-proline + ATP = L-prolyl-tRNA(Pro) + AMP + diphosphate. Functionally, catalyzes the attachment of proline to tRNA(Pro) in a two-step reaction: proline is first activated by ATP to form Pro-AMP and then transferred to the acceptor end of tRNA(Pro). As ProRS can inadvertently accommodate and process non-cognate amino acids such as alanine and cysteine, to avoid such errors it has two additional distinct editing activities against alanine. One activity is designated as 'pretransfer' editing and involves the tRNA(Pro)-independent hydrolysis of activated Ala-AMP. The other activity is designated 'posttransfer' editing and involves deacylation of mischarged Ala-tRNA(Pro). The misacylated Cys-tRNA(Pro) is not edited by ProRS. In Streptococcus agalactiae serotype V (strain ATCC BAA-611 / 2603 V/R), this protein is Proline--tRNA ligase.